A 32-amino-acid polypeptide reads, in one-letter code: Zinc metalloproteinase carinactivase-1 catalytic subunit (32 aa).

The Peptidase M12B domain occupies 10 to 32 (FIKLVIVVDHSMVXKXNNDLIAI).

This sequence belongs to the venom metalloproteinase (M12B) family. P-III subfamily. P-IIId sub-subfamily. Heterodimer of a metalloproteinase subunit and a regulatory subunit comprising two disulfide-linked lectins (14 kDa and 17 kDa chains) (AC Q9PRP7 and AC Q9PRP8). The cofactor is Zn(2+). As to expression, expressed by the venom gland.

Its subcellular location is the secreted. Its function is as follows. Calcium-dependent prothrombin (F2) activator. This protein may activate prothrombin via recognition by the regulatory subunit of the calcium ion bound conformation of its gamma-carboxyglutamic acid (GLA) domain, and the subsequent conversion of prothrombin to active thrombin is catalyzed by the catalytic subunit. The polypeptide is Zinc metalloproteinase carinactivase-1 catalytic subunit (Echis carinatus (Saw-scaled viper)).